A 202-amino-acid chain; its full sequence is Molybdenum cofactor guanylyltransferase (202 aa).

GTP is bound by residues 9 to 11, Lys22, Asp70, and Asp96; that span reads LAG. Mg(2+) is bound at residue Asp96.

This sequence belongs to the MobA family. In terms of assembly, monomer. The cofactor is Mg(2+).

The protein localises to the cytoplasm. It catalyses the reaction Mo-molybdopterin + GTP + H(+) = Mo-molybdopterin guanine dinucleotide + diphosphate. In terms of biological role, transfers a GMP moiety from GTP to Mo-molybdopterin (Mo-MPT) cofactor (Moco or molybdenum cofactor) to form Mo-molybdopterin guanine dinucleotide (Mo-MGD) cofactor. This is Molybdenum cofactor guanylyltransferase from Desulfosudis oleivorans (strain DSM 6200 / JCM 39069 / Hxd3) (Desulfococcus oleovorans).